Consider the following 606-residue polypeptide: Glutamine--fructose-6-phosphate aminotransferase [isomerizing] (606 aa).

Cys2 functions as the Nucleophile; for GATase activity in the catalytic mechanism. The Glutamine amidotransferase type-2 domain maps to 2-217; it reads CGIIGIVGKE…EGDYVALDHD (216 aa). SIS domains are found at residues 280–421 and 454–596; these read VPGD…ARGT and IAAD…VDQP. The active-site For Fru-6P isomerization activity is the Lys601.

Homodimer.

It localises to the cytoplasm. It carries out the reaction D-fructose 6-phosphate + L-glutamine = D-glucosamine 6-phosphate + L-glutamate. Functionally, catalyzes the first step in hexosamine metabolism, converting fructose-6P into glucosamine-6P using glutamine as a nitrogen source. In Caulobacter vibrioides (strain ATCC 19089 / CIP 103742 / CB 15) (Caulobacter crescentus), this protein is Glutamine--fructose-6-phosphate aminotransferase [isomerizing].